Reading from the N-terminus, the 507-residue chain is O-fucosyltransferase 30 (507 aa).

A helical; Signal-anchor for type II membrane protein membrane pass occupies residues 26-46 (AIFLCSVSILVVFFIVVFFIT). N-linked (GlcNAc...) asparagine glycosylation is found at Asn110, Asn146, Asn398, and Asn410.

This sequence belongs to the glycosyltransferase GT106 family.

Its subcellular location is the membrane. It participates in glycan metabolism. The polypeptide is O-fucosyltransferase 30 (Arabidopsis thaliana (Mouse-ear cress)).